A 240-amino-acid chain; its full sequence is Orotidine 5'-phosphate decarboxylase (240 aa).

Substrate contacts are provided by residues aspartate 19, lysine 41, 68 to 77, threonine 123, arginine 184, glutamine 193, glycine 213, and arginine 214; that span reads DYKYYDIEET. The active-site Proton donor is lysine 70.

Belongs to the OMP decarboxylase family. Type 1 subfamily. Homodimer.

It catalyses the reaction orotidine 5'-phosphate + H(+) = UMP + CO2. Its pathway is pyrimidine metabolism; UMP biosynthesis via de novo pathway; UMP from orotate: step 2/2. Its function is as follows. Catalyzes the decarboxylation of orotidine 5'-monophosphate (OMP) to uridine 5'-monophosphate (UMP). The polypeptide is Orotidine 5'-phosphate decarboxylase (Nitrobacter winogradskyi (strain ATCC 25391 / DSM 10237 / CIP 104748 / NCIMB 11846 / Nb-255)).